A 170-amino-acid chain; its full sequence is Protein ripply3 (170 aa).

A WRPW motif motif is present at residues 40-43 (WRPW). The span at 51–61 (ELDGQQRRSGE) shows a compositional bias: basic and acidic residues. The disordered stretch occupies residues 51-78 (ELDGQQRRSGEADGVPTNTGPKGALGFQ). The interval 79-114 (HPVRLYMPKSKTSEYLQHMGRKVLASFPVQATIHFY) is ripply homology domain. Residues 142-155 (GVDSSRGSSDNYSV) show a composition bias toward polar residues. Residues 142–170 (GVDSSRGSSDNYSVQGGPKRNIGSHAGSA) are disordered.

The protein belongs to the ripply family. In terms of assembly, interacts with tbx1 and tle4/grg4. As to expression, at neurula stage, expressed in the region close to the heart mesoderm. At the tailbud stage, expressed in the pharyngeal region.

It localises to the nucleus. Its function is as follows. Acts as a transcriptional corepressor. Negative regulator of the transcriptional activity of tbx1 that plays a key role in pharyngeal development. Plays a role in the formation of the anteroposterior (AP) axis during embryonic development; required to establish the posterolateral border of the pre-placodal ectoderm (PPE) acting downstream of the retinoic acid receptor (RAR) signaling. The polypeptide is Protein ripply3 (ripply3) (Xenopus laevis (African clawed frog)).